Reading from the N-terminus, the 267-residue chain is Small ribosomal subunit protein uS2 (267 aa).

Residues 232–267 (ATVREEEFADAPAEDAKPARRAPAKKAAADKGEAQA) are disordered. Basic and acidic residues predominate over residues 258–267 (AAADKGEAQA).

The protein belongs to the universal ribosomal protein uS2 family.

The protein is Small ribosomal subunit protein uS2 of Stenotrophomonas maltophilia (strain R551-3).